The chain runs to 47 residues: Short transmembrane mitochondrial protein 1 (47 aa).

Residues 7–23 form a helical membrane-spanning segment; sequence GFTLGNVVGMYLAQNYD.

The protein belongs to the STMP1 family. As to quaternary structure, interacts with components of the ubiquinol-cytochrome c oxidoreductase (cytochrome b-c1 complex, complex III, CIII), such as UQCRC1/QCR1, UQCRC2/QCR2 and UQCR10/QCR9. Interacts with components of the cytochrome c oxidase (mitochondrial respiratory chain complex IV) complex, such as MT-CO2. As to expression, expressed in monocytes and dendritic cells.

The protein resides in the mitochondrion inner membrane. It localises to the mitochondrion outer membrane. Its subcellular location is the mitochondrion intermembrane space. Its function is as follows. Microprotein involved in mitochondrial respiratory chain complex III (ubiquinol-cytochrome c oxidoreductase) and complex IV (mitochondrial cytochrome c oxidase complex) assembly. Required for the formation of mitochondrial supercomplexes (SCs). Also required for the activation of the NLRP3 inflammasome. The protein is Short transmembrane mitochondrial protein 1 of Homo sapiens (Human).